Here is a 224-residue protein sequence, read N- to C-terminus: GrpE protein homolog 2, mitochondrial (224 aa).

Residues 1–31 constitute a mitochondrion transit peptide; sequence MAARSLWAVQRLQRLLASGAMSESRGWLHPF. At Lys-141 the chain carries N6-acetyllysine.

The protein belongs to the GrpE family. As to quaternary structure, probable component of the PAM complex at least composed of a mitochondrial HSP70 protein, GRPEL1 or GRPEL2, TIMM44, TIMM16/PAM16 and TIMM14/DNAJC19. As to expression, ubiquitous.

It is found in the mitochondrion matrix. In terms of biological role, essential component of the PAM complex, a complex required for the translocation of transit peptide-containing proteins from the inner membrane into the mitochondrial matrix in an ATP-dependent manner. Seems to control the nucleotide-dependent binding of mitochondrial HSP70 to substrate proteins. Stimulates ATPase activity of mt-HSP70. May also serve to modulate the interconversion of oligomeric (inactive) and monomeric (active) forms of mt-HSP70. In Mus musculus (Mouse), this protein is GrpE protein homolog 2, mitochondrial (Grpel2).